Reading from the N-terminus, the 368-residue chain is Histidinol dehydrogenase (368 aa).

Thr-197, Gln-218, and His-221 together coordinate substrate. Zn(2+) is bound by residues Gln-218 and His-221. Residues Glu-276 and His-277 each act as proton acceptor in the active site. Positions 277, 306, 358, and 363 each coordinate substrate. Residue Asp-306 coordinates Zn(2+). Residue His-363 coordinates Zn(2+).

The protein belongs to the histidinol dehydrogenase family. Requires Zn(2+) as cofactor.

The enzyme catalyses L-histidinol + 2 NAD(+) + H2O = L-histidine + 2 NADH + 3 H(+). The protein operates within amino-acid biosynthesis; L-histidine biosynthesis; L-histidine from 5-phospho-alpha-D-ribose 1-diphosphate: step 9/9. Catalyzes the sequential NAD-dependent oxidations of L-histidinol to L-histidinaldehyde and then to L-histidine. This chain is Histidinol dehydrogenase, found in Pyrobaculum aerophilum (strain ATCC 51768 / DSM 7523 / JCM 9630 / CIP 104966 / NBRC 100827 / IM2).